Reading from the N-terminus, the 819-residue chain is DNA topoisomerase 4 subunit A (819 aa).

The Topo IIA-type catalytic domain occupies 30 to 496 (LPDIRDGLKP…QIIEIDTASL (467 aa)). Tyr-118 serves as the catalytic O-(5'-phospho-DNA)-tyrosine intermediate.

This sequence belongs to the type II topoisomerase GyrA/ParC subunit family. ParC type 2 subfamily. As to quaternary structure, heterotetramer composed of ParC and ParE.

It localises to the cell membrane. It carries out the reaction ATP-dependent breakage, passage and rejoining of double-stranded DNA.. Functionally, topoisomerase IV is essential for chromosome segregation. It relaxes supercoiled DNA. Performs the decatenation events required during the replication of a circular DNA molecule. This is DNA topoisomerase 4 subunit A from Streptococcus pyogenes serotype M1.